The primary structure comprises 699 residues: DNA ligase (699 aa).

The disordered stretch occupies residues 1–29 (MSDADVDAESNPYLRDPPTEFEPAESLSR). Residues 60 to 64 (DAAYD), 108 to 109 (SI), and E137 each bind NAD(+). Residue K139 is the N6-AMP-lysine intermediate of the active site. NAD(+) is bound by residues R160, E196, K311, and K335. The Zn(2+) site is built by C425, C428, C441, and C447. The 54-residue stretch at 613-666 (SGGDELDGLTFVVTGTLAASRSDVTELVESHGGNVTGSVSGNTDYLVVGENPGR) folds into the BRCT domain.

Belongs to the NAD-dependent DNA ligase family. LigA subfamily. Mg(2+) is required as a cofactor. It depends on Mn(2+) as a cofactor.

The enzyme catalyses NAD(+) + (deoxyribonucleotide)n-3'-hydroxyl + 5'-phospho-(deoxyribonucleotide)m = (deoxyribonucleotide)n+m + AMP + beta-nicotinamide D-nucleotide.. With respect to regulation, displays maximal in vitro activity at high salt levels. DNA ligase that catalyzes the formation of phosphodiester linkages between 5'-phosphoryl and 3'-hydroxyl groups in double-stranded DNA using NAD as a coenzyme and as the energy source for the reaction. It is essential for DNA replication and repair of damaged DNA. This is DNA ligase from Haloferax volcanii (strain ATCC 29605 / DSM 3757 / JCM 8879 / NBRC 14742 / NCIMB 2012 / VKM B-1768 / DS2) (Halobacterium volcanii).